The sequence spans 194 residues: dCTP deaminase (194 aa).

DCTP is bound by residues 110-115 (RSSLAR), Asp128, 136-138 (VLE), Tyr171, Lys178, and Gln182. The Proton donor/acceptor role is filled by Glu138.

Belongs to the dCTP deaminase family. As to quaternary structure, homotrimer.

The catalysed reaction is dCTP + H2O + H(+) = dUTP + NH4(+). Its pathway is pyrimidine metabolism; dUMP biosynthesis; dUMP from dCTP (dUTP route): step 1/2. Catalyzes the deamination of dCTP to dUTP. This Pseudoalteromonas translucida (strain TAC 125) protein is dCTP deaminase.